Here is a 181-residue protein sequence, read N- to C-terminus: MKKTLLAIILGGMAFATTNASANTGTINFNGKITSATCTIDPEVNGNRTSTIDLGQAAISGHGTVVDFKLKPAPGSNDCLAKTNARIDWSGSMNSLGFNNTASGNTAAKGYHMTLRATNVGNGSGGANINTSFTTAEYTHTSAIQSFNYSAQLKKDDRAPSNGGYKAGVFTTSASFLVTYM.

A signal peptide spans methionine 1–alanine 22. An intrachain disulfide couples cysteine 38 to cysteine 79.

Belongs to the fimbrial protein family.

It localises to the fimbrium. Fimbriae (also called pili), polar filaments radiating from the surface of the bacterium to a length of 0.5-1.5 micrometers and numbering 100-300 per cell, enable bacteria to colonize the epithelium of specific host organs. Functionally, fanC is the main component of the K99 fimbriae. The sequence is that of K99 fimbrial protein (fanC) from Escherichia coli.